Here is a 430-residue protein sequence, read N- to C-terminus: Histidine--tRNA ligase (430 aa).

It belongs to the class-II aminoacyl-tRNA synthetase family. As to quaternary structure, homodimer.

The protein localises to the cytoplasm. It carries out the reaction tRNA(His) + L-histidine + ATP = L-histidyl-tRNA(His) + AMP + diphosphate + H(+). The polypeptide is Histidine--tRNA ligase (Acinetobacter baumannii (strain ACICU)).